A 521-amino-acid chain; its full sequence is Apolipoprotein N-acyltransferase (521 aa).

The next 6 membrane-spanning stretches (helical) occupy residues 34–54 (LAAP…PLLV), 64–84 (AFWL…RWLL), 100–120 (LAIA…VIGL), 137–157 (LFAV…ETAF), 176–196 (VALG…ALVA), and 206–226 (YAGL…WQLA). In terms of domain architecture, CN hydrolase spans 240-480 (IQGNIAQARK…YAAFVEPVRL (241 aa)). E281 functions as the Proton acceptor in the catalytic mechanism. Residue K341 is part of the active site. Residue C392 is the Nucleophile of the active site. Residues 488–508 (ALWGDWFVPLSAALALLGLIA) traverse the membrane as a helical segment.

This sequence belongs to the CN hydrolase family. Apolipoprotein N-acyltransferase subfamily.

The protein resides in the cell inner membrane. The catalysed reaction is N-terminal S-1,2-diacyl-sn-glyceryl-L-cysteinyl-[lipoprotein] + a glycerophospholipid = N-acyl-S-1,2-diacyl-sn-glyceryl-L-cysteinyl-[lipoprotein] + a 2-acyl-sn-glycero-3-phospholipid + H(+). It functions in the pathway protein modification; lipoprotein biosynthesis (N-acyl transfer). Its function is as follows. Catalyzes the phospholipid dependent N-acylation of the N-terminal cysteine of apolipoprotein, the last step in lipoprotein maturation. The polypeptide is Apolipoprotein N-acyltransferase (Gloeobacter violaceus (strain ATCC 29082 / PCC 7421)).